Reading from the N-terminus, the 212-residue chain is MEKFTTHTGVGVPLRRSNVDTDQIIPAVYLKRVTRTGFEDALFAAWRGNETFVLNQPAYTHGSVLVAGPDFGTGSSREHAVWALKDYGFRVVIASRFADIFRGNSGKQGLLAAQVAQDDVELIWKVLENSPGTEVTVDLAAKQVTVADIVAPFQIDDYTRWRLLEGLDDIGLTLQHADEITAFEATREPWRPLTLPAKHLPAVPITAARPVA.

This sequence belongs to the LeuD family. LeuD type 1 subfamily. As to quaternary structure, heterodimer of LeuC and LeuD.

It carries out the reaction (2R,3S)-3-isopropylmalate = (2S)-2-isopropylmalate. Its pathway is amino-acid biosynthesis; L-leucine biosynthesis; L-leucine from 3-methyl-2-oxobutanoate: step 2/4. Catalyzes the isomerization between 2-isopropylmalate and 3-isopropylmalate, via the formation of 2-isopropylmaleate. In Beutenbergia cavernae (strain ATCC BAA-8 / DSM 12333 / CCUG 43141 / JCM 11478 / NBRC 16432 / NCIMB 13614 / HKI 0122), this protein is 3-isopropylmalate dehydratase small subunit.